The following is a 491-amino-acid chain: Ketol-acid reductoisomerase (NADP(+)) (491 aa).

One can recognise a KARI N-terminal Rossmann domain in the interval 15 to 208 (AQLGKCRFMA…GGHRAGVLES (194 aa)). NADP(+)-binding positions include 45 to 48 (CGAQ), Arg68, Arg76, Ser78, and 108 to 110 (DKQ). His132 is a catalytic residue. Residue Gly158 participates in NADP(+) binding. KARI C-terminal knotted domains are found at residues 209–344 (SFVA…TASQ) and 345–484 (FDGK…MKDM). Mg(2+)-binding residues include Asp217, Glu221, Glu389, and Glu393. Position 414 (Ser414) interacts with substrate.

The protein belongs to the ketol-acid reductoisomerase family. The cofactor is Mg(2+).

It catalyses the reaction (2R)-2,3-dihydroxy-3-methylbutanoate + NADP(+) = (2S)-2-acetolactate + NADPH + H(+). It carries out the reaction (2R,3R)-2,3-dihydroxy-3-methylpentanoate + NADP(+) = (S)-2-ethyl-2-hydroxy-3-oxobutanoate + NADPH + H(+). It participates in amino-acid biosynthesis; L-isoleucine biosynthesis; L-isoleucine from 2-oxobutanoate: step 2/4. It functions in the pathway amino-acid biosynthesis; L-valine biosynthesis; L-valine from pyruvate: step 2/4. In terms of biological role, involved in the biosynthesis of branched-chain amino acids (BCAA). Catalyzes an alkyl-migration followed by a ketol-acid reduction of (S)-2-acetolactate (S2AL) to yield (R)-2,3-dihydroxy-isovalerate. In the isomerase reaction, S2AL is rearranged via a Mg-dependent methyl migration to produce 3-hydroxy-3-methyl-2-ketobutyrate (HMKB). In the reductase reaction, this 2-ketoacid undergoes a metal-dependent reduction by NADPH to yield (R)-2,3-dihydroxy-isovalerate. The polypeptide is Ketol-acid reductoisomerase (NADP(+)) (Enterobacter sp. (strain 638)).